The following is a 348-amino-acid chain: D-alanine--D-alanine ligase (348 aa).

The ATP-grasp domain occupies 132–334 (KRVLESIGIP…YPDLIEVLVT (203 aa)). An ATP-binding site is contributed by 162–217 (LARLTFPIFVKPANMGSSVGISKAQTKVELRKAIQLALTYDSRVLIEQGVVAREIE). Positions 288, 301, and 303 each coordinate Mg(2+).

Belongs to the D-alanine--D-alanine ligase family. Mg(2+) is required as a cofactor. It depends on Mn(2+) as a cofactor.

It localises to the cytoplasm. It carries out the reaction 2 D-alanine + ATP = D-alanyl-D-alanine + ADP + phosphate + H(+). It participates in cell wall biogenesis; peptidoglycan biosynthesis. In terms of biological role, cell wall formation. The sequence is that of D-alanine--D-alanine ligase from Streptococcus pyogenes serotype M2 (strain MGAS10270).